The chain runs to 462 residues: ATP synthase subunit beta (462 aa).

151 to 158 (GGAGVGKT) contributes to the ATP binding site.

The protein belongs to the ATPase alpha/beta chains family. F-type ATPases have 2 components, CF(1) - the catalytic core - and CF(0) - the membrane proton channel. CF(1) has five subunits: alpha(3), beta(3), gamma(1), delta(1), epsilon(1). CF(0) has four main subunits: a(1), b(1), b'(1) and c(9-12).

It localises to the cell inner membrane. It catalyses the reaction ATP + H2O + 4 H(+)(in) = ADP + phosphate + 5 H(+)(out). Its function is as follows. Produces ATP from ADP in the presence of a proton gradient across the membrane. The catalytic sites are hosted primarily by the beta subunits. The protein is ATP synthase subunit beta of Pelodictyon phaeoclathratiforme (strain DSM 5477 / BU-1).